Here is a 497-residue protein sequence, read N- to C-terminus: Probable malate:quinone oxidoreductase (497 aa).

This sequence belongs to the MQO family. FAD is required as a cofactor.

It carries out the reaction (S)-malate + a quinone = a quinol + oxaloacetate. It participates in carbohydrate metabolism; tricarboxylic acid cycle; oxaloacetate from (S)-malate (quinone route): step 1/1. The polypeptide is Probable malate:quinone oxidoreductase (Wolinella succinogenes (strain ATCC 29543 / DSM 1740 / CCUG 13145 / JCM 31913 / LMG 7466 / NCTC 11488 / FDC 602W) (Vibrio succinogenes)).